We begin with the raw amino-acid sequence, 612 residues long: Polyadenylation factor subunit 2 (612 aa).

Residues 1–21 (MAYEPRGDHGGGGGGQGQDGA) are disordered. WD repeat units lie at residues 93–132 (KIKH…FETI), 135–175 (AHDS…QSIN), 177–215 (HTDP…MESK), 218–257 (GHGW…CLTT), 260–300 (GHKS…DICL), 303–345 (GHEK…PGQS), and 373–412 (AHDY…DAEV). Disordered regions lie at residues 424–450 (AEAQ…MEDE), 486–514 (PPPP…GSLP), and 544–612 (PPPG…TRAR). Basic and acidic residues predominate over residues 430 to 442 (WDRRGGRRQRQEE). Composition is skewed to pro residues over residues 486–506 (PPPP…PFPL) and 544–575 (PPPG…PPPM).

The protein resides in the nucleus. Functionally, required for 3'-end cleavage and polyadenylation of pre-mRNAs. Also involved in chromosome segregation where it has a role in chromosome attachment to the mitotic spindle. In Gibberella zeae (strain ATCC MYA-4620 / CBS 123657 / FGSC 9075 / NRRL 31084 / PH-1) (Wheat head blight fungus), this protein is Polyadenylation factor subunit 2 (PFS2).